The chain runs to 151 residues: Ribosome maturation factor RimP (151 aa).

This sequence belongs to the RimP family.

The protein resides in the cytoplasm. Functionally, required for maturation of 30S ribosomal subunits. The protein is Ribosome maturation factor RimP of Vibrio vulnificus (strain CMCP6).